Reading from the N-terminus, the 545-residue chain is CTP synthase (545 aa).

The interval 2 to 266 (TTNYIFVTGG…DDYICKRFSL (265 aa)) is amidoligase domain. Position 14 (serine 14) interacts with CTP. Position 14 (serine 14) interacts with UTP. ATP-binding positions include 15–20 (SLGKGI) and aspartate 72. Positions 72 and 140 each coordinate Mg(2+). CTP-binding positions include 147-149 (DIE), 187-192 (KTKPTQ), and lysine 223. UTP is bound by residues 187–192 (KTKPTQ) and lysine 223. 239–241 (KDV) is a binding site for ATP. The 252-residue stretch at 291–542 (TIGMVGKYIE…VKAANEHQKR (252 aa)) folds into the Glutamine amidotransferase type-1 domain. Glycine 352 is an L-glutamine binding site. The active-site Nucleophile; for glutamine hydrolysis is cysteine 379. L-glutamine contacts are provided by residues 380–383 (LGMQ), glutamate 403, and arginine 470. Active-site residues include histidine 515 and glutamate 517.

This sequence belongs to the CTP synthase family. Homotetramer.

It catalyses the reaction UTP + L-glutamine + ATP + H2O = CTP + L-glutamate + ADP + phosphate + 2 H(+). The enzyme catalyses L-glutamine + H2O = L-glutamate + NH4(+). It carries out the reaction UTP + NH4(+) + ATP = CTP + ADP + phosphate + 2 H(+). It functions in the pathway pyrimidine metabolism; CTP biosynthesis via de novo pathway; CTP from UDP: step 2/2. With respect to regulation, allosterically activated by GTP, when glutamine is the substrate; GTP has no effect on the reaction when ammonia is the substrate. The allosteric effector GTP functions by stabilizing the protein conformation that binds the tetrahedral intermediate(s) formed during glutamine hydrolysis. Inhibited by the product CTP, via allosteric rather than competitive inhibition. Its function is as follows. Catalyzes the ATP-dependent amination of UTP to CTP with either L-glutamine or ammonia as the source of nitrogen. Regulates intracellular CTP levels through interactions with the four ribonucleotide triphosphates. The polypeptide is CTP synthase (Salmonella typhi).